The sequence spans 413 residues: Multifunctional CCA protein (413 aa).

2 residues coordinate ATP: glycine 8 and arginine 11. Glycine 8 and arginine 11 together coordinate CTP. Residues glutamate 21 and aspartate 23 each contribute to the Mg(2+) site. ATP-binding residues include arginine 91, arginine 137, and arginine 140. Residues arginine 91, arginine 137, and arginine 140 each contribute to the CTP site. Positions 228–329 constitute an HD domain; it reads CGIHTLMSLR…WRLLQRLDVL (102 aa).

This sequence belongs to the tRNA nucleotidyltransferase/poly(A) polymerase family. Bacterial CCA-adding enzyme type 1 subfamily. In terms of assembly, monomer. Can also form homodimers and oligomers. It depends on Mg(2+) as a cofactor. Requires Ni(2+) as cofactor.

The catalysed reaction is a tRNA precursor + 2 CTP + ATP = a tRNA with a 3' CCA end + 3 diphosphate. The enzyme catalyses a tRNA with a 3' CCA end + 2 CTP + ATP = a tRNA with a 3' CCACCA end + 3 diphosphate. Its function is as follows. Catalyzes the addition and repair of the essential 3'-terminal CCA sequence in tRNAs without using a nucleic acid template. Adds these three nucleotides in the order of C, C, and A to the tRNA nucleotide-73, using CTP and ATP as substrates and producing inorganic pyrophosphate. tRNA 3'-terminal CCA addition is required both for tRNA processing and repair. Also involved in tRNA surveillance by mediating tandem CCA addition to generate a CCACCA at the 3' terminus of unstable tRNAs. While stable tRNAs receive only 3'-terminal CCA, unstable tRNAs are marked with CCACCA and rapidly degraded. The sequence is that of Multifunctional CCA protein from Acinetobacter baylyi (strain ATCC 33305 / BD413 / ADP1).